Here is a 1030-residue protein sequence, read N- to C-terminus: Peroxisomal ATPase PEX6 (1030 aa).

The segment at 478 to 683 (VLLHSTTNNV…VETARMTATA (206 aa)) is AAA-cassette D1. The interval 767–956 (GILFYGPPGT…CSDAMLNAMS (190 aa)) is AAA-cassette D2. 772–779 (GPPGTGKT) lines the ATP pocket.

It belongs to the AAA ATPase family. As to quaternary structure, interacts with PEX1; forming the PEX1-PEX6 AAA ATPase complex, which is composed of a heterohexamer formed by a trimer of PEX1-PEX6 dimers. Interacts with PEX15; anchors PEX1-PEX6 heterooligomers to the peroxisomal membrane and mediates their association with the peroxisomal importomer. Interacts with UBP15.

The protein localises to the cytoplasm. It localises to the cytosol. Its subcellular location is the peroxisome membrane. It catalyses the reaction ATP + H2O = ADP + phosphate + H(+). Its function is as follows. Component of the PEX1-PEX6 AAA ATPase complex, a protein dislocase complex that mediates the ATP-dependent extraction of the PEX5 receptor from peroxisomal membranes, an essential step for PEX5 recycling. Specifically recognizes PEX5 monoubiquitinated at 'Cys-6', and pulls it out of the peroxisome lumen through the PEX2-PEX10-PEX12 retrotranslocation channel. Extraction by the PEX1-PEX6 AAA ATPase complex is accompanied by unfolding of the TPR repeats and release of bound cargo from PEX5. In Saccharomyces cerevisiae (strain ATCC 204508 / S288c) (Baker's yeast), this protein is Peroxisomal ATPase PEX6.